The following is a 985-amino-acid chain: Serine/threonine-protein kinase N2 (985 aa).

The region spanning K33–V109 is the REM-1 1 domain. K77 is modified (N6-acetyllysine). S110 is subject to Phosphoserine. Positions D111–N136 are disordered. Phosphothreonine is present on residues T121 and T124. The span at T121–N136 shows a compositional bias: low complexity. 2 REM-1 domains span residues T121–L204 and D207–K286. S303, S307, S361, and S363 each carry phosphoserine. The disordered stretch occupies residues A352 to N383. In terms of domain architecture, C2 spans S354–F474. Low complexity predominate over residues R366 to R382. A necessary to rescue apical junction formation region spans residues N383 to A464. S536, S584, S621, and S632 each carry phosphoserine. Residues D570–D590 form a disordered region. One can recognise a Protein kinase domain in the interval F658–F917. ATP contacts are provided by residues L664–V672 and K687. The active-site Proton acceptor is D783. T817 carries the post-translational modification Phosphothreonine; by PDPK1. Residues R918–F978 form a necessary for the catalytic activity region. The 68-residue stretch at R918–C985 folds into the AGC-kinase C-terminal domain. S953 is subject to Phosphoserine. Position 959 is a phosphothreonine (T959). The segment at D979–C985 is negatively regulates the responsiveness of the catalytic activity by cardiolipin and is required for optimal activation by the GTP-bound RhoA.

Belongs to the protein kinase superfamily. AGC Ser/Thr protein kinase family. PKC subfamily. In terms of assembly, interacts (via the REM repeats) with RHOA (GTP-bound form preferentially) and interacts (via the REM repeats) with RAC1 (GTP-bound form preferentially); the interactions induce its autophosphorylation. Interacts with RHOC. Interacts with NCK1 (via SH3 domains) and NCK2. Interacts with CD44. Interacts (via C-terminal kinase domain) with PDPK1; the interaction stimulates PDPK1 kinase activity. Interacts with MAP3K2; the interaction activates PRK2 kinase activity in a MAP3K2-independent kinase activity. Interacts (via C-terminal domain) with AKT1; the interaction occurs with the C-terminal cleavage product of PRK2 in apoptotic cells. Interacts (via C-terminus) with PTPN13 (via PDZ 3 domain). Interacts with CDK10. Post-translationally, phosphorylated during mitosis. Autophosphorylated. Phosphorylated. Binding to Rho and Rac promotes autophosphorylation and phosphorylation on serine and threonine residues. Phosphorylated by CDK10. Proteolytically cleaved by caspase-3 during the induction of apoptotic cell death. Activated by limited proteolysis with trypsin. Expressed in liver (at protein level).

Its subcellular location is the cytoplasm. It localises to the nucleus. The protein localises to the membrane. It is found in the cell projection. The protein resides in the lamellipodium. Its subcellular location is the cytoskeleton. It localises to the cleavage furrow. The protein localises to the midbody. It is found in the cell junction. The catalysed reaction is L-seryl-[protein] + ATP = O-phospho-L-seryl-[protein] + ADP + H(+). The enzyme catalyses L-threonyl-[protein] + ATP = O-phospho-L-threonyl-[protein] + ADP + H(+). Its activity is regulated as follows. Kinase activity is activated upon binding to GTP-bound Rho1/Rac1 GTPases. Activated by caspase-3 (CASP3) cleavage during apoptosis. Activated by lipids, particularly cardiolipin and to a lesser extent by other acidic phospholipids and unsaturated fatty acids. Two specific sites, Thr-817 (activation loop of the kinase domain) and Thr-959 (turn motif), need to be phosphorylated for its full activation. In terms of biological role, PKC-related serine/threonine-protein kinase and Rho/Rac effector protein that participates in specific signal transduction responses in the cell. Plays a role in the regulation of cell cycle progression, actin cytoskeleton assembly, cell migration, cell adhesion, tumor cell invasion and transcription activation signaling processes. Phosphorylates CTTN in hyaluronan-induced astrocytes and hence decreases CTTN ability to associate with filamentous actin. Phosphorylates HDAC5, therefore lead to impair HDAC5 import. Direct RhoA target required for the regulation of the maturation of primordial junctions into apical junction formation in bronchial epithelial cells. Required for G2/M phases of the cell cycle progression and abscission during cytokinesis in a ECT2-dependent manner. Stimulates FYN kinase activity that is required for establishment of skin cell-cell adhesion during keratinocytes differentiation. Regulates epithelial bladder cells speed and direction of movement during cell migration and tumor cell invasion. Inhibits Akt pro-survival-induced kinase activity. Mediates Rho protein-induced transcriptional activation via the c-fos serum response factor (SRF). Involved in the negative regulation of ciliogenesis. The chain is Serine/threonine-protein kinase N2 (Pkn2) from Rattus norvegicus (Rat).